The following is a 280-amino-acid chain: Rhomboid-like protein 11, chloroplastic (280 aa).

Residues M1–F57 constitute a chloroplast transit peptide. Over S58–N82 the chain is Stromal. Residues G83 to V103 form a helical membrane-spanning segment. Residues R104 to A117 are Chloroplast intermembrane-facing. A helical transmembrane segment spans residues W118–F140. Residues L141 to N154 lie on the Stromal side of the membrane. A helical membrane pass occupies residues F155 to V175. Topologically, residues L176 to R178 are chloroplast intermembrane. A helical membrane pass occupies residues N179 to V199. S186 serves as the catalytic Nucleophile. Residues K200–Q243 are Stromal-facing. A helical membrane pass occupies residues T244 to L264. H250 (charge relay system) is an active-site residue. The Chloroplast intermembrane segment spans residues S265 to S280.

The protein belongs to the peptidase S54 family. Homooligomer.

Its subcellular location is the plastid. The protein localises to the chloroplast inner membrane. Its function is as follows. Rhomboid-type serine protease that catalyzes intramembrane proteolysis. May be involved in TIC22 processing during its import. This chain is Rhomboid-like protein 11, chloroplastic, found in Arabidopsis thaliana (Mouse-ear cress).